A 220-amino-acid polypeptide reads, in one-letter code: Lactate utilization protein C (220 aa).

Belongs to the LutC/YkgG family.

Is involved in L-lactate degradation and allows cells to grow with lactate as the sole carbon source. This chain is Lactate utilization protein C, found in Anoxybacillus flavithermus (strain DSM 21510 / WK1).